Here is a 1683-residue protein sequence, read N- to C-terminus: A-kinase anchor protein SPHKAP (1683 aa).

2 stretches are compositionally biased toward polar residues: residues 1 to 14 (MDVNSRLSVQSNVE) and 289 to 301 (AENTALQSLNPSA). Disordered regions lie at residues 1–30 (MDVNSRLSVQSNVESPLMPEDSEPQQITSS), 275–320 (RMPS…ATNY), and 582–601 (LLPTPGASEERSSIGSLVTE). The interval 910 to 927 (FAEELAETVVSMATEIAA) is PKA-RII subunit binding domain. The segment at 960 to 983 (LKRKKENSGTGSTVRKHKPPRLSE) is disordered. 8 positions are modified to phosphoserine: Ser-1006, Ser-1066, Ser-1088, Ser-1101, Ser-1102, Ser-1105, Ser-1240, and Ser-1269. Disordered regions lie at residues 1359 to 1387 (VTEGNCSPVSSPSKMAPVKKPSGFDPTRE) and 1415 to 1518 (ETDQ…DTSS). The span at 1362 to 1371 (GNCSPVSSPS) shows a compositional bias: polar residues. Positions 1469–1490 (LETREELEVDVLKEDITLDESR) are enriched in basic and acidic residues. Residues 1492-1504 (PPSSSEESTGSWS) show a composition bias toward low complexity.

Belongs to the AKAP110 family. As to quaternary structure, interacts (via the PKA-RII subunit binding domain) with the RI subunit of PKA. Interacts with SPHK1; the interaction greatly reduces SPHK1 activity. As to expression, abundant in heart ventricle (at protein level).

It localises to the cytoplasm. Its function is as follows. Anchoring protein that binds preferentially to the type I regulatory subunit of c-AMP-dependent protein kinase (PKA type I) and targets it to distinct subcellular compartments. May act as a converging factor linking cAMP and sphingosine signaling pathways. Plays a regulatory role in the modulation of SPHK1. The polypeptide is A-kinase anchor protein SPHKAP (Sphkap) (Rattus norvegicus (Rat)).